The chain runs to 425 residues: Inositol hexakisphosphate kinase 2 (425 aa).

Residues E206–L208 and D219 contribute to the ATP site. Residues P215–G223, K221, and K235–K242 contribute to the substrate site. Residue D382 coordinates ATP. Residue H385 participates in substrate binding.

It belongs to the inositol phosphokinase (IPK) family. In terms of tissue distribution, detected in kidney, intestine, liver and heart.

The protein resides in the nucleus. The enzyme catalyses 1D-myo-inositol hexakisphosphate + ATP = 5-diphospho-1D-myo-inositol 1,2,3,4,6-pentakisphosphate + ADP. The protein operates within phospholipid metabolism; phosphatidylinositol metabolism. Functionally, converts inositol hexakisphosphate (InsP6) to diphosphoinositol pentakisphosphate (InsP7/PP-InsP5). This Oryctolagus cuniculus (Rabbit) protein is Inositol hexakisphosphate kinase 2 (IP6K2).